The chain runs to 297 residues: Oxidoreductase aprR (297 aa).

This sequence belongs to the NmrA-type oxidoreductase family. Isoflavone reductase subfamily.

Its pathway is secondary metabolite biosynthesis. Its function is as follows. Oxidoreductase; part of the gene cluster that mediates the biosynthesis of the asperipin-2a, a bicyclic peptide that possesses two macrocyclic ether rings consisting of 14- and 17-membered paracyclophans. The pathway starts with the processing of the precursor aprA by kexin proteases to produce 11 identical copies of the hexapeptide Phe-Tyr-Tyr-Thr-Gly-Tyr. Macrocyclization of asperipin-2a may accompany an alpha-hydroxylation-dehydration sequence to give an imine, which is readily hydrolyzed to yield putative ketone intermediate. The reductase aprR may be required for the final reduction to yield asperipin-2a. In Aspergillus flavus (strain ATCC 200026 / FGSC A1120 / IAM 13836 / NRRL 3357 / JCM 12722 / SRRC 167), this protein is Oxidoreductase aprR.